The chain runs to 144 residues: HTH-type transcriptional regulator LrpC (144 aa).

The region spanning 3–64 (LDQIDLNIIE…EVDQKKLGLP (62 aa)) is the HTH asnC-type domain. The H-T-H motif DNA-binding region spans 22–41 (MRELGRKIKLSPPSVTERVR).

Transcriptional regulator with a possible role in regulation of amino acid metabolism. Plays a role in the growth phase transition. This is HTH-type transcriptional regulator LrpC (lrpC) from Bacillus subtilis (strain 168).